The primary structure comprises 61 residues: MDPNCSCPTGGSCTCAGSCKCKACRCPSCKKSCCSCCPVGCAKCAQGCVCKGASDKCSCCA.

M1 carries the post-translational modification N-acetylmethionine. The interval 1-29 (MDPNCSCPTGGSCTCAGSCKCKACRCPSC) is beta. Residues C5, C7, C13, C15, C19, C21, C24, C26, C29, C33, C34, C36, C37, C41, C44, C48, C50, C57, C59, and C60 each coordinate a divalent metal cation. Residues 30–61 (KKSCCSCCPVGCAKCAQGCVCKGASDKCSCCA) are alpha.

It belongs to the metallothionein superfamily. Type 1 family. In terms of assembly, monomer.

Functionally, metallothioneins have a high content of cysteine residues that bind various heavy metals; these proteins are transcriptionally regulated by both heavy metals and glucocorticoids. The chain is Metallothionein-1 (MT1) from Bos taurus (Bovine).